An 888-amino-acid polypeptide reads, in one-letter code: Aconitate hydratase A (888 aa).

Residues Cys433, Cys499, and Cys502 each contribute to the [4Fe-4S] cluster site.

The protein belongs to the aconitase/IPM isomerase family. As to quaternary structure, monomer. The cofactor is [4Fe-4S] cluster.

The catalysed reaction is citrate = D-threo-isocitrate. The enzyme catalyses (2S,3R)-3-hydroxybutane-1,2,3-tricarboxylate = 2-methyl-cis-aconitate + H2O. It functions in the pathway carbohydrate metabolism; tricarboxylic acid cycle; isocitrate from oxaloacetate: step 2/2. The protein operates within organic acid metabolism; propanoate degradation. Involved in the catabolism of short chain fatty acids (SCFA) via the tricarboxylic acid (TCA)(acetyl degradation route) and probably the 2-methylcitrate cycle I (propionate degradation route). Catalyzes the reversible isomerization of citrate to isocitrate via cis-aconitate. Could catalyze the hydration of 2-methyl-cis-aconitate to yield (2R,3S)-2-methylisocitrate. The apo form of AcnA functions as a RNA-binding regulatory protein. In Streptococcus mutans serotype c (strain ATCC 700610 / UA159), this protein is Aconitate hydratase A (acn).